Consider the following 417-residue polypeptide: MLKREMNIADYDAELWRAMEQEVVRQEEHIELIASENYTSPRVMQAQGSQLTNKYAEGYPGKRYYGGCEYVDIVEQLAIDRAKELFGADYANVQPHSGSQANFAVYTALLQPGDTILGMNLAHGGHLTHGSPVNLSGKLYNVVPYGIDEKGQIDYEDLAKQAQTHKPKMIIGGFSAFSGIVDWAKMREIADSIGAYLFVDMAHVAGLIAAGVYPNPVPHAHIVTTTTHKTLAGPRGGLILAKGGDEDLYKKLNSAVFPGGQGGPLMHVIAGKAVALKEAMEPEFKIYQQQVAKNAKAMVEVVLERGYKVVSGGTHNHLFLLDLVDKNLTGKEADAALGRANITVNKNSVPNDPKSPFVTSGVRIGTPAVTRRGFKEADVRELAGWICDVLDNINDEATIERTKKKVLDICARLPVYA.

(6S)-5,6,7,8-tetrahydrofolate contacts are provided by residues L121 and 125-127 (GHL). Position 229 is an N6-(pyridoxal phosphate)lysine (K229). 355 to 357 (SPF) is a (6S)-5,6,7,8-tetrahydrofolate binding site.

The protein belongs to the SHMT family. In terms of assembly, homodimer. Pyridoxal 5'-phosphate is required as a cofactor.

Its subcellular location is the cytoplasm. The enzyme catalyses (6R)-5,10-methylene-5,6,7,8-tetrahydrofolate + glycine + H2O = (6S)-5,6,7,8-tetrahydrofolate + L-serine. It participates in one-carbon metabolism; tetrahydrofolate interconversion. The protein operates within amino-acid biosynthesis; glycine biosynthesis; glycine from L-serine: step 1/1. Functionally, catalyzes the reversible interconversion of serine and glycine with tetrahydrofolate (THF) serving as the one-carbon carrier. This reaction serves as the major source of one-carbon groups required for the biosynthesis of purines, thymidylate, methionine, and other important biomolecules. Also exhibits THF-independent aldolase activity toward beta-hydroxyamino acids, producing glycine and aldehydes, via a retro-aldol mechanism. The sequence is that of Serine hydroxymethyltransferase from Serratia proteamaculans (strain 568).